The primary structure comprises 263 residues: 4-hydroxy-tetrahydrodipicolinate reductase (263 aa).

Residues 7 to 12, 96 to 98, and 122 to 125 contribute to the NAD(+) site; these read GFKGRM, GTT, and APNF. The active-site Proton donor/acceptor is His-152. (S)-2,3,4,5-tetrahydrodipicolinate is bound at residue His-153. The active-site Proton donor is the Lys-156. Residue 162–163 participates in (S)-2,3,4,5-tetrahydrodipicolinate binding; sequence GT.

The protein belongs to the DapB family.

The protein resides in the cytoplasm. It catalyses the reaction (S)-2,3,4,5-tetrahydrodipicolinate + NAD(+) + H2O = (2S,4S)-4-hydroxy-2,3,4,5-tetrahydrodipicolinate + NADH + H(+). The catalysed reaction is (S)-2,3,4,5-tetrahydrodipicolinate + NADP(+) + H2O = (2S,4S)-4-hydroxy-2,3,4,5-tetrahydrodipicolinate + NADPH + H(+). It participates in amino-acid biosynthesis; L-lysine biosynthesis via DAP pathway; (S)-tetrahydrodipicolinate from L-aspartate: step 4/4. Its function is as follows. Catalyzes the conversion of 4-hydroxy-tetrahydrodipicolinate (HTPA) to tetrahydrodipicolinate. The chain is 4-hydroxy-tetrahydrodipicolinate reductase from Listeria monocytogenes serotype 4b (strain F2365).